We begin with the raw amino-acid sequence, 91 residues long: C-C motif chemokine 5 (91 aa).

A signal peptide spans 1-23 (MKISAAALTIILTAAALCTPAPA). 2 cysteine pairs are disulfide-bonded: Cys-33/Cys-57 and Cys-34/Cys-73.

This sequence belongs to the intercrine beta (chemokine CC) family. In terms of tissue distribution, T-cell and macrophage specific.

It localises to the secreted. Chemoattractant for blood monocytes, memory T-helper cells and eosinophils. Causes the release of histamine from basophils and activates eosinophils. May activate several chemokine receptors including CCR1, CCR3, CCR4 and CCR5. May also be an agonist of the G protein-coupled receptor GPR75. Together with GPR75, may play a role in neuron survival through activation of a downstream signaling pathway involving the PI3, Akt and MAP kinases. By activating GPR75 may also play a role in insulin secretion by islet cells. This chain is C-C motif chemokine 5 (Ccl5), found in Mus musculus (Mouse).